A 121-amino-acid polypeptide reads, in one-letter code: Small ribosomal subunit protein uS13 (121 aa).

The segment at glycine 94–lysine 121 is disordered.

This sequence belongs to the universal ribosomal protein uS13 family. Part of the 30S ribosomal subunit. Forms a loose heterodimer with protein S19. Forms two bridges to the 50S subunit in the 70S ribosome.

Functionally, located at the top of the head of the 30S subunit, it contacts several helices of the 16S rRNA. In the 70S ribosome it contacts the 23S rRNA (bridge B1a) and protein L5 of the 50S subunit (bridge B1b), connecting the 2 subunits; these bridges are implicated in subunit movement. Contacts the tRNAs in the A and P-sites. This is Small ribosomal subunit protein uS13 from Burkholderia mallei (strain NCTC 10247).